A 475-amino-acid polypeptide reads, in one-letter code: Cysteine--tRNA ligase (475 aa).

Residue cysteine 28 coordinates Zn(2+). The 'HIGH' region signature appears at 30–40; that stretch reads PTVYDETHIGH. Zn(2+)-binding residues include cysteine 208, histidine 233, and glutamate 237. The 'KMSKS' region signature appears at 265-269; it reads KMSKS. Lysine 268 provides a ligand contact to ATP.

This sequence belongs to the class-I aminoacyl-tRNA synthetase family. Requires Zn(2+) as cofactor.

The protein localises to the cytoplasm. The catalysed reaction is tRNA(Cys) + L-cysteine + ATP = L-cysteinyl-tRNA(Cys) + AMP + diphosphate. The chain is Cysteine--tRNA ligase from Methanococcus vannielii (strain ATCC 35089 / DSM 1224 / JCM 13029 / OCM 148 / SB).